The following is a 512-amino-acid chain: Sorting nexin MVP1 (512 aa).

The tract at residues 1–24 (MDLEADPWRVNSEENGNNISGSVW) is disordered. A compositionally biased stretch (low complexity) spans 13–22 (EENGNNISGS). In terms of domain architecture, PX spans 130–248 (AEDIVSVEEI…LTFLTVPTDL (119 aa)). The a 1,2-diacyl-sn-glycero-3-phospho-(1D-myo-inositol-3-phosphate) site is built by Arg-174, Ser-176, Lys-200, and Arg-215.

It belongs to the sorting nexin family.

Its subcellular location is the cytoplasm. It localises to the membrane. Required for vacuolar protein sorting. The sequence is that of Sorting nexin MVP1 (MVP1) from Kluyveromyces lactis (strain ATCC 8585 / CBS 2359 / DSM 70799 / NBRC 1267 / NRRL Y-1140 / WM37) (Yeast).